A 398-amino-acid chain; its full sequence is 1-deoxy-D-xylulose 5-phosphate reductoisomerase (398 aa).

NADPH contacts are provided by threonine 10, glycine 11, serine 12, isoleucine 13, lysine 37, asparagine 38, and asparagine 124. Lysine 125 lines the 1-deoxy-D-xylulose 5-phosphate pocket. Residue glutamate 126 participates in NADPH binding. Aspartate 150 provides a ligand contact to Mn(2+). Residues serine 151, glutamate 152, serine 186, and histidine 209 each coordinate 1-deoxy-D-xylulose 5-phosphate. Residue glutamate 152 participates in Mn(2+) binding. Glycine 215 contacts NADPH. Residues serine 222, asparagine 227, lysine 228, and glutamate 231 each contribute to the 1-deoxy-D-xylulose 5-phosphate site. Mn(2+) is bound at residue glutamate 231.

Belongs to the DXR family. As to quaternary structure, homodimer. Mg(2+) serves as cofactor. Mn(2+) is required as a cofactor.

It catalyses the reaction 2-C-methyl-D-erythritol 4-phosphate + NADP(+) = 1-deoxy-D-xylulose 5-phosphate + NADPH + H(+). It functions in the pathway isoprenoid biosynthesis; isopentenyl diphosphate biosynthesis via DXP pathway; isopentenyl diphosphate from 1-deoxy-D-xylulose 5-phosphate: step 1/6. Functionally, catalyzes the NADPH-dependent rearrangement and reduction of 1-deoxy-D-xylulose-5-phosphate (DXP) to 2-C-methyl-D-erythritol 4-phosphate (MEP). This Buchnera aphidicola subsp. Acyrthosiphon pisum (strain 5A) protein is 1-deoxy-D-xylulose 5-phosphate reductoisomerase.